The chain runs to 115 residues: MNLPLALTTSITLTLLLVTIAFWLPQLNVYTEKYSPYECGFDPMGSARLPFSMKFFLVAITFLLFDLEIALLLPLPWASQTNNLKLMLTVALVLITILAAGLAYEWLQKGLEWVE.

A run of 3 helical transmembrane segments spans residues 3 to 23 (LPLALTTSITLTLLLVTIAFW), 55 to 75 (FFLVAITFLLFDLEIALLLPL), and 86 to 106 (LMLTVALVLITILAAGLAYEW).

Belongs to the complex I subunit 3 family. Core subunit of respiratory chain NADH dehydrogenase (Complex I) which is composed of 45 different subunits. Interacts with TMEM186. Interacts with TMEM242.

The protein localises to the mitochondrion inner membrane. The enzyme catalyses a ubiquinone + NADH + 5 H(+)(in) = a ubiquinol + NAD(+) + 4 H(+)(out). In terms of biological role, core subunit of the mitochondrial membrane respiratory chain NADH dehydrogenase (Complex I) which catalyzes electron transfer from NADH through the respiratory chain, using ubiquinone as an electron acceptor. Essential for the catalytic activity of complex I. This is NADH-ubiquinone oxidoreductase chain 3 from Lemur catta (Ring-tailed lemur).